The sequence spans 197 residues: Pyridoxal 5'-phosphate synthase subunit PdxT (197 aa).

An L-glutamine-binding site is contributed by 53 to 55 (GES). The active-site Nucleophile is the Cys-85. L-glutamine contacts are provided by residues Arg-114 and 142–143 (IR). Catalysis depends on charge relay system residues His-179 and Glu-181.

The protein belongs to the glutaminase PdxT/SNO family. In the presence of PdxS, forms a dodecamer of heterodimers. Only shows activity in the heterodimer.

The enzyme catalyses aldehydo-D-ribose 5-phosphate + D-glyceraldehyde 3-phosphate + L-glutamine = pyridoxal 5'-phosphate + L-glutamate + phosphate + 3 H2O + H(+). The catalysed reaction is L-glutamine + H2O = L-glutamate + NH4(+). It functions in the pathway cofactor biosynthesis; pyridoxal 5'-phosphate biosynthesis. Functionally, catalyzes the hydrolysis of glutamine to glutamate and ammonia as part of the biosynthesis of pyridoxal 5'-phosphate. The resulting ammonia molecule is channeled to the active site of PdxS. The sequence is that of Pyridoxal 5'-phosphate synthase subunit PdxT from Thermococcus kodakarensis (strain ATCC BAA-918 / JCM 12380 / KOD1) (Pyrococcus kodakaraensis (strain KOD1)).